Here is a 113-residue protein sequence, read N- to C-terminus: MSEMPTPVNFTEAAASKVSGLIQDEGNPELKLRVYITGGGCSGFQYGFTFDESQAEDDTVVEKDGVKLMIDPMSFQYLMGAKIDYLEDLQGARFVIENPNASTTCGCGSSFGV.

Residues Cys41, Cys105, and Cys107 each contribute to the iron-sulfur cluster site.

It belongs to the HesB/IscA family. As to quaternary structure, homodimer. It depends on iron-sulfur cluster as a cofactor.

In terms of biological role, required for insertion of 4Fe-4S clusters for at least IspG. In Hydrogenovibrio crunogenus (strain DSM 25203 / XCL-2) (Thiomicrospira crunogena), this protein is Iron-sulfur cluster insertion protein ErpA.